Reading from the N-terminus, the 157-residue chain is Cytochrome c-type biogenesis protein CcmE (157 aa).

Residues 1 to 8 are Cytoplasmic-facing; that stretch reads MNPLRRKR. The helical; Signal-anchor for type II membrane protein transmembrane segment at 9–29 threads the bilayer; the sequence is LLIILAVLGGVGLALTLALSA. Residues 30–157 lie on the Periplasmic side of the membrane; the sequence is LKENINLFYT…ASMPARQADR (128 aa). Heme contacts are provided by H124 and Y128. The disordered stretch occupies residues 132–157; that stretch reads EVSKALRESGQATPAPASMPARQADR.

Belongs to the CcmE/CycJ family.

The protein resides in the cell inner membrane. In terms of biological role, heme chaperone required for the biogenesis of c-type cytochromes. Transiently binds heme delivered by CcmC and transfers the heme to apo-cytochromes in a process facilitated by CcmF and CcmH. The protein is Cytochrome c-type biogenesis protein CcmE of Pseudomonas syringae pv. tomato (strain ATCC BAA-871 / DC3000).